Reading from the N-terminus, the 295-residue chain is HTH-type transcriptional regulator TfdS (295 aa).

Residues 1–58 (MEFRQLRYFVAAAEEGNVGAAARRLHISQPPVTRQIHALEQHLGVLLFERSARGVQLT) form the HTH lysR-type domain. A DNA-binding region (H-T-H motif) is located at residues 18–37 (VGAAARRLHISQPPVTRQIH).

It belongs to the LysR transcriptional regulatory family.

Its subcellular location is the cytoplasm. Its function is as follows. Involved in the regulation of 3-chlorocatechol degradation. Transcriptional regulator of tfdB expression. Acts as a repressor in the absence of its effector (either 2-cis-chlorodiene lactone or chloromaleylacetate) but acts as an activator when its effector is present. This is HTH-type transcriptional regulator TfdS (tfdS) from Cupriavidus pinatubonensis (strain JMP 134 / LMG 1197) (Cupriavidus necator (strain JMP 134)).